A 449-amino-acid chain; its full sequence is Tubulin beta-4 chain (449 aa).

Positions 1-4 (MREI) match the MREI motif motif. GTP contacts are provided by glutamine 11, glutamate 69, serine 138, glycine 142, threonine 143, glycine 144, asparagine 204, and asparagine 226. Residue glutamate 69 coordinates Mg(2+). The segment at 421–449 (EYQQYQDATAEEEGEMYEDDEEESEQGAK) is disordered. Residues 429-449 (TAEEEGEMYEDDEEESEQGAK) are compositionally biased toward acidic residues. Glutamate 438 carries the 5-glutamyl polyglutamate modification. Serine 444 bears the Phosphoserine mark.

The protein belongs to the tubulin family. As to quaternary structure, dimer of alpha and beta chains. A typical microtubule is a hollow water-filled tube with an outer diameter of 25 nm and an inner diameter of 15 nM. Alpha-beta heterodimers associate head-to-tail to form protofilaments running lengthwise along the microtubule wall with the beta-tubulin subunit facing the microtubule plus end conferring a structural polarity. Microtubules usually have 13 protofilaments but different protofilament numbers can be found in some organisms and specialized cells. Requires Mg(2+) as cofactor. In terms of processing, some glutamate residues at the C-terminus are polyglycylated, resulting in polyglycine chains on the gamma-carboxyl group. Glycylation is mainly limited to tubulin incorporated into axonemes (cilia and flagella) whereas glutamylation is prevalent in neuronal cells, centrioles, axonemes, and the mitotic spindle. Both modifications can coexist on the same protein on adjacent residues, and lowering polyglycylation levels increases polyglutamylation, and reciprocally. The precise function of polyglycylation is still unclear. Some glutamate residues at the C-terminus are polyglutamylated, resulting in polyglutamate chains on the gamma-carboxyl group. Polyglutamylation plays a key role in microtubule severing by spastin (SPAST). SPAST preferentially recognizes and acts on microtubules decorated with short polyglutamate tails: severing activity by SPAST increases as the number of glutamates per tubulin rises from one to eight, but decreases beyond this glutamylation threshold. As to expression, neuron specific.

The protein resides in the cytoplasm. The protein localises to the cytoskeleton. Functionally, tubulin is the major constituent of microtubules, a cylinder consisting of laterally associated linear protofilaments composed of alpha- and beta-tubulin heterodimers. Microtubules grow by the addition of GTP-tubulin dimers to the microtubule end, where a stabilizing cap forms. Below the cap, tubulin dimers are in GDP-bound state, owing to GTPase activity of alpha-tubulin. The sequence is that of Tubulin beta-4 chain from Gallus gallus (Chicken).